The following is a 208-amino-acid chain: Uracil phosphoribosyltransferase (208 aa).

5-phospho-alpha-D-ribose 1-diphosphate contacts are provided by residues arginine 78, arginine 103, and 130–138 (DPMLATANS). Residues isoleucine 193 and 198-200 (GDA) contribute to the uracil site. Position 199 (aspartate 199) interacts with 5-phospho-alpha-D-ribose 1-diphosphate.

The protein belongs to the UPRTase family. Mg(2+) serves as cofactor.

The enzyme catalyses UMP + diphosphate = 5-phospho-alpha-D-ribose 1-diphosphate + uracil. The protein operates within pyrimidine metabolism; UMP biosynthesis via salvage pathway; UMP from uracil: step 1/1. With respect to regulation, allosterically activated by GTP. Functionally, catalyzes the conversion of uracil and 5-phospho-alpha-D-ribose 1-diphosphate (PRPP) to UMP and diphosphate. In Brucella ovis (strain ATCC 25840 / 63/290 / NCTC 10512), this protein is Uracil phosphoribosyltransferase.